The primary structure comprises 446 residues: Eukaryotic translation initiation factor 3 subunit E (446 aa).

In terms of domain architecture, PCI spans 240–420; that stretch reads PLFNDENSRE…GTVVMNHPNS (181 aa).

It belongs to the eIF-3 subunit E family. Component of the eukaryotic translation initiation factor 3 (eIF-3) complex.

The protein resides in the cytoplasm. Functionally, component of the eukaryotic translation initiation factor 3 (eIF-3) complex, which is involved in protein synthesis of a specialized repertoire of mRNAs and, together with other initiation factors, stimulates binding of mRNA and methionyl-tRNAi to the 40S ribosome. The eIF-3 complex specifically targets and initiates translation of a subset of mRNAs involved in cell proliferation. The protein is Eukaryotic translation initiation factor 3 subunit E of Pyricularia oryzae (strain 70-15 / ATCC MYA-4617 / FGSC 8958) (Rice blast fungus).